The primary structure comprises 336 residues: Ferredoxin--NADP reductase 1 (336 aa).

7 residues coordinate FAD: Glu37, Lys45, Phe50, Val90, Leu125, Asp287, and Thr328.

The protein belongs to the ferredoxin--NADP reductase type 2 family. In terms of assembly, homodimer. FAD is required as a cofactor.

The enzyme catalyses 2 reduced [2Fe-2S]-[ferredoxin] + NADP(+) + H(+) = 2 oxidized [2Fe-2S]-[ferredoxin] + NADPH. The sequence is that of Ferredoxin--NADP reductase 1 from Bacillus velezensis (strain DSM 23117 / BGSC 10A6 / LMG 26770 / FZB42) (Bacillus amyloliquefaciens subsp. plantarum).